The sequence spans 349 residues: Insulin gene enhancer protein ISL-1 (349 aa).

2 consecutive LIM zinc-binding domains span residues Cys17–Asp70 and Cys79–His133. Residues Thr181 to Ser240 constitute a DNA-binding region (homeobox). Residues Gly262–Trp291 are LIM-binding domain (LID). Residues Val312 to Ala349 are disordered. Positions Ser321–Val343 are enriched in polar residues.

At neuronal promoters, displaces LDB1 from LHX3 LIM domain to form a ternary complex in which ISL1 contacts both LHX3 and LDB1; allosteric structural changes in the DNA binding domain of LHX3, induced by the ISL1:LHX3 interaction, may explain differences in sequence specificity of the different complexes. Interacts with LHX3. Interacts (via C-terminus) with POU4F2 (via C-terminus) isoform 1. Interacts with POU3F2. Interacts with POU4F3. Interacts (via N-terminal domain) with MLIP; the interaction represses ISL1 transactivator activity. Interacts with GCN5/KAT2A. Interactions of ISL1 with MLIP1 or KAT2A may be mutually exclusive. Ubiquitinated probably by WWP1 E3 ubiquitin ligase; ubiquitination is followed by protein degradation. In terms of processing, phosphorylated. Expressed in subsets of neurons of the adrenal medulla and dorsal root ganglion, inner nuclear and ganglion cell layers in the retina, the pineal and some regions of the brain.

It is found in the nucleus. In terms of biological role, DNA-binding transcriptional activator. Recognizes and binds to the consensus octamer binding site 5'-ATAATTAA-3' in promoter of target genes. Plays a fundamental role in the gene regulatory network essential for retinal ganglion cell (RGC) differentiation. Cooperates with the transcription factor POU4F2 to achieve maximal levels of expression of RGC target genes and RGC fate specification in the developing retina. Involved in the specification of motor neurons in cooperation with LHX3 and LDB1. Binds to insulin gene enhancer sequences. Essential for heart development. Marker of one progenitor cell population that give rise to the outflow tract, right ventricle, a subset of left ventricular cells, and a large number of atrial cells as well, its function is required for these progenitors to contribute to the heart. Controls the expression of FGF and BMP growth factors in this cell population and is required for proliferation and survival of cells within pharyngeal foregut endoderm and adjacent splanchnic mesoderm as well as for migration of cardiac progenitors into the heart. In Homo sapiens (Human), this protein is Insulin gene enhancer protein ISL-1 (ISL1).